The chain runs to 554 residues: Glucose-6-phosphate isomerase (554 aa).

The active-site Proton donor is the Glu359. Active-site residues include His390 and Lys518.

Belongs to the GPI family.

The protein localises to the cytoplasm. The catalysed reaction is alpha-D-glucose 6-phosphate = beta-D-fructose 6-phosphate. It participates in carbohydrate biosynthesis; gluconeogenesis. It functions in the pathway carbohydrate degradation; glycolysis; D-glyceraldehyde 3-phosphate and glycerone phosphate from D-glucose: step 2/4. Catalyzes the reversible isomerization of glucose-6-phosphate to fructose-6-phosphate. The polypeptide is Glucose-6-phosphate isomerase (Pseudomonas syringae pv. syringae (strain B728a)).